The chain runs to 441 residues: Cysteine proteinase (441 aa).

C249 and C290 are disulfide-bonded. Residue C252 is part of the active site. N-linked (GlcNAc...) asparagine glycans are attached at residues N270 and N345. Catalysis depends on residues H381 and N403.

Belongs to the peptidase C1 family.

The chain is Cysteine proteinase (TACP) from Theileria annulata.